A 261-amino-acid polypeptide reads, in one-letter code: tRNA U34 carboxymethyltransferase (261 aa).

Residues lysine 25, tryptophan 39, lysine 44, glycine 63, 114–115 (VE), tyrosine 135, and arginine 250 each bind carboxy-S-adenosyl-L-methionine.

This sequence belongs to the class I-like SAM-binding methyltransferase superfamily. CmoB family. In terms of assembly, homotetramer.

It catalyses the reaction carboxy-S-adenosyl-L-methionine + 5-hydroxyuridine(34) in tRNA = 5-carboxymethoxyuridine(34) in tRNA + S-adenosyl-L-homocysteine + H(+). In terms of biological role, catalyzes carboxymethyl transfer from carboxy-S-adenosyl-L-methionine (Cx-SAM) to 5-hydroxyuridine (ho5U) to form 5-carboxymethoxyuridine (cmo5U) at position 34 in tRNAs. This Helicobacter pylori (strain HPAG1) protein is tRNA U34 carboxymethyltransferase.